The chain runs to 455 residues: UDP-N-acetylmuramoylalanine--D-glutamate ligase (455 aa).

Gly118–Thr124 is a binding site for ATP.

Belongs to the MurCDEF family.

Its subcellular location is the cytoplasm. The catalysed reaction is UDP-N-acetyl-alpha-D-muramoyl-L-alanine + D-glutamate + ATP = UDP-N-acetyl-alpha-D-muramoyl-L-alanyl-D-glutamate + ADP + phosphate + H(+). It participates in cell wall biogenesis; peptidoglycan biosynthesis. Cell wall formation. Catalyzes the addition of glutamate to the nucleotide precursor UDP-N-acetylmuramoyl-L-alanine (UMA). This chain is UDP-N-acetylmuramoylalanine--D-glutamate ligase, found in Chromohalobacter salexigens (strain ATCC BAA-138 / DSM 3043 / CIP 106854 / NCIMB 13768 / 1H11).